A 143-amino-acid chain; its full sequence is Large ribosomal subunit protein uL11 (143 aa).

Belongs to the universal ribosomal protein uL11 family. Part of the ribosomal stalk of the 50S ribosomal subunit. Interacts with L10 and the large rRNA to form the base of the stalk. L10 forms an elongated spine to which L12 dimers bind in a sequential fashion forming a multimeric L10(L12)X complex. In terms of processing, one or more lysine residues are methylated.

In terms of biological role, forms part of the ribosomal stalk which helps the ribosome interact with GTP-bound translation factors. The polypeptide is Large ribosomal subunit protein uL11 (Leifsonia xyli subsp. xyli (strain CTCB07)).